The primary structure comprises 112 residues: Putative acyl carrier protein, mitochondrial (112 aa).

Residues 1-28 (MLSRFSSQLRFISAVRPVIPKFQPLRFY) constitute a mitochondrion transit peptide. The Carrier domain maps to 33-109 (PDAEKRILKV…DAISYITKNP (77 aa)). S69 carries the O-(pantetheine 4'-phosphoryl)serine modification.

Belongs to the acyl carrier protein (ACP) family. 4'-phosphopantetheine is transferred from CoA to a specific serine of apo-ACP by acpS. This modification is essential for activity because fatty acids are bound in thioester linkage to the sulfhydryl of the prosthetic group.

It localises to the mitochondrion. It functions in the pathway lipid metabolism; fatty acid biosynthesis. Functionally, carrier of the growing fatty acid chain in fatty acid biosynthesis. May be involved in the synthesis of very-long-chain fatty acids. The sequence is that of Putative acyl carrier protein, mitochondrial from Schizosaccharomyces pombe (strain 972 / ATCC 24843) (Fission yeast).